A 358-amino-acid polypeptide reads, in one-letter code: L-Ala-D/L-Glu epimerase (358 aa).

Positions 24, 135, and 160 each coordinate substrate. The active-site Proton acceptor; specific for (R)-substrate epimerization is the Lys162. Positions 190, 218, and 243 each coordinate Mg(2+). Lys267 acts as the Proton acceptor; specific for (S)-substrate epimerization in catalysis. Cys295, Asp320, and Asp322 together coordinate substrate.

It belongs to the mandelate racemase/muconate lactonizing enzyme family. Mg(2+) is required as a cofactor.

It carries out the reaction L-alanyl-L-glutamate = L-alanyl-D-glutamate. Its pathway is cell wall degradation; peptidoglycan degradation. Functionally, catalyzes the epimerization of L-Ala-D-Glu to L-Ala-L-Glu and has probably a role in the metabolism of the murein peptide, of which L-Ala-D-Glu is a component. Is also able to catalyze the epimerization of L-Ala-D-Asp. The polypeptide is L-Ala-D/L-Glu epimerase (Clostridium acetobutylicum (strain ATCC 824 / DSM 792 / JCM 1419 / IAM 19013 / LMG 5710 / NBRC 13948 / NRRL B-527 / VKM B-1787 / 2291 / W)).